The sequence spans 117 residues: Large ribosomal subunit protein bL17 (117 aa).

Belongs to the bacterial ribosomal protein bL17 family. In terms of assembly, part of the 50S ribosomal subunit. Contacts protein L32.

The chain is Large ribosomal subunit protein bL17 from Exiguobacterium sp. (strain ATCC BAA-1283 / AT1b).